A 121-amino-acid chain; its full sequence is Small ribosomal subunit protein uS13 (121 aa).

Residues 93–121 are disordered; sequence RNLPVRGQRTRTNARTCKGPRKSMNKQFK. Positions 110–121 are enriched in basic residues; sequence KGPRKSMNKQFK.

It belongs to the universal ribosomal protein uS13 family. Part of the 30S ribosomal subunit. Forms a loose heterodimer with protein S19. Forms two bridges to the 50S subunit in the 70S ribosome.

In terms of biological role, located at the top of the head of the 30S subunit, it contacts several helices of the 16S rRNA. In the 70S ribosome it contacts the 23S rRNA (bridge B1a) and protein L5 of the 50S subunit (bridge B1b), connecting the 2 subunits; these bridges are implicated in subunit movement. Contacts the tRNAs in the A and P-sites. In Blochmanniella pennsylvanica (strain BPEN), this protein is Small ribosomal subunit protein uS13.